Here is a 389-residue protein sequence, read N- to C-terminus: Chalcone synthase H2 (389 aa).

C164 is a catalytic residue.

This sequence belongs to the thiolase-like superfamily. Chalcone/stilbene synthases family.

Its subcellular location is the cytoplasm. It carries out the reaction (E)-4-coumaroyl-CoA + 3 malonyl-CoA + 3 H(+) = 2',4,4',6'-tetrahydroxychalcone + 3 CO2 + 4 CoA. Its pathway is secondary metabolite biosynthesis; flavonoid biosynthesis. In terms of biological role, involved in the biosynthesis of prenylated phenolics natural products which contribute to the bitter taste of beer and display broad biological activities. Chalcone synthase that can use 4-coumaroyl-CoA to produce 4,2',4',6'-tetrahydroxychalcone (also termed naringenin-chalcone or chalcone) which can, under specific conditions, spontaneously isomerize into naringenin. The polypeptide is Chalcone synthase H2 (Humulus lupulus (European hop)).